The chain runs to 81 residues: Photosystem I iron-sulfur center (81 aa).

4Fe-4S ferredoxin-type domains are found at residues 2 to 31 (SHSV…MVPW) and 37 to 68 (GQIA…VRVY). [4Fe-4S] cluster is bound by residues cysteine 11, cysteine 14, cysteine 17, cysteine 21, cysteine 48, cysteine 51, cysteine 54, and cysteine 58.

In terms of assembly, the eukaryotic PSI reaction center is composed of at least 11 subunits. It depends on [4Fe-4S] cluster as a cofactor.

Its subcellular location is the plastid. The protein localises to the chloroplast thylakoid membrane. It carries out the reaction reduced [plastocyanin] + hnu + oxidized [2Fe-2S]-[ferredoxin] = oxidized [plastocyanin] + reduced [2Fe-2S]-[ferredoxin]. Apoprotein for the two 4Fe-4S centers FA and FB of photosystem I (PSI); essential for photochemical activity. FB is the terminal electron acceptor of PSI, donating electrons to ferredoxin. The C-terminus interacts with PsaA/B/D and helps assemble the protein into the PSI complex. Required for binding of PsaD and PsaE to PSI. PSI is a plastocyanin/cytochrome c6-ferredoxin oxidoreductase, converting photonic excitation into a charge separation, which transfers an electron from the donor P700 chlorophyll pair to the spectroscopically characterized acceptors A0, A1, FX, FA and FB in turn. This is Photosystem I iron-sulfur center from Euglena gracilis.